The primary structure comprises 513 residues: GMP synthase [glutamine-hydrolyzing] (513 aa).

Residues 9–198 (LILVLDFGSQ…IREICKCTGE (190 aa)) enclose the Glutamine amidotransferase type-1 domain. Residue cysteine 86 is the Nucleophile of the active site. Active-site residues include histidine 172 and glutamate 174. Residues 199–388 (WTMENFIEIE…LGIPEHLVWR (190 aa)) form the GMPS ATP-PPase domain. ATP is bound at residue 226-232 (SGGVDSS).

As to quaternary structure, homodimer.

The enzyme catalyses XMP + L-glutamine + ATP + H2O = GMP + L-glutamate + AMP + diphosphate + 2 H(+). Its pathway is purine metabolism; GMP biosynthesis; GMP from XMP (L-Gln route): step 1/1. Functionally, catalyzes the synthesis of GMP from XMP. The polypeptide is GMP synthase [glutamine-hydrolyzing] (Macrococcus caseolyticus (strain JCSC5402) (Macrococcoides caseolyticum)).